The sequence spans 263 residues: Ribosomal RNA small subunit methyltransferase J (263 aa).

S-adenosyl-L-methionine is bound by residues 115–116, 131–132, and D181; these read RD and ER.

The protein belongs to the methyltransferase superfamily. RsmJ family.

The protein resides in the cytoplasm. The enzyme catalyses guanosine(1516) in 16S rRNA + S-adenosyl-L-methionine = N(2)-methylguanosine(1516) in 16S rRNA + S-adenosyl-L-homocysteine + H(+). In terms of biological role, specifically methylates the guanosine in position 1516 of 16S rRNA. This is Ribosomal RNA small subunit methyltransferase J from Hahella chejuensis (strain KCTC 2396).